The primary structure comprises 139 residues: D-ribose pyranase (139 aa).

The active-site Proton donor is His-20. Residues Asp-28, His-106, and 128–130 each bind substrate; that span reads YAN.

The protein belongs to the RbsD / FucU family. RbsD subfamily. In terms of assembly, homodecamer.

It localises to the cytoplasm. The enzyme catalyses beta-D-ribopyranose = beta-D-ribofuranose. It functions in the pathway carbohydrate metabolism; D-ribose degradation; D-ribose 5-phosphate from beta-D-ribopyranose: step 1/2. Functionally, catalyzes the interconversion of beta-pyran and beta-furan forms of D-ribose. In Histophilus somni (strain 2336) (Haemophilus somnus), this protein is D-ribose pyranase.